A 99-amino-acid chain; its full sequence is Phosphoribosyl-ATP pyrophosphatase (99 aa).

This sequence belongs to the PRA-PH family.

It localises to the cytoplasm. The enzyme catalyses 1-(5-phospho-beta-D-ribosyl)-ATP + H2O = 1-(5-phospho-beta-D-ribosyl)-5'-AMP + diphosphate + H(+). It participates in amino-acid biosynthesis; L-histidine biosynthesis; L-histidine from 5-phospho-alpha-D-ribose 1-diphosphate: step 2/9. In Methanococcoides burtonii (strain DSM 6242 / NBRC 107633 / OCM 468 / ACE-M), this protein is Phosphoribosyl-ATP pyrophosphatase.